The sequence spans 402 residues: 4-hydroxy-3-methylbut-2-enyl diphosphate reductase (402 aa).

A [4Fe-4S] cluster-binding site is contributed by cysteine 66. Histidine 96 contacts (2E)-4-hydroxy-3-methylbut-2-enyl diphosphate. Histidine 96 lines the dimethylallyl diphosphate pocket. Isopentenyl diphosphate is bound at residue histidine 96. Cysteine 157 is a binding site for [4Fe-4S] cluster. Residue histidine 185 participates in (2E)-4-hydroxy-3-methylbut-2-enyl diphosphate binding. Histidine 185 contributes to the dimethylallyl diphosphate binding site. Residue histidine 185 coordinates isopentenyl diphosphate. Glutamate 187 (proton donor) is an active-site residue. A (2E)-4-hydroxy-3-methylbut-2-enyl diphosphate-binding site is contributed by threonine 250. Cysteine 288 lines the [4Fe-4S] cluster pocket. (2E)-4-hydroxy-3-methylbut-2-enyl diphosphate-binding residues include serine 317, serine 318, asparagine 319, and serine 379. Residues serine 317, serine 318, asparagine 319, and serine 379 each contribute to the dimethylallyl diphosphate site. Positions 317, 318, 319, and 379 each coordinate isopentenyl diphosphate.

It belongs to the IspH family. Requires [4Fe-4S] cluster as cofactor.

It catalyses the reaction isopentenyl diphosphate + 2 oxidized [2Fe-2S]-[ferredoxin] + H2O = (2E)-4-hydroxy-3-methylbut-2-enyl diphosphate + 2 reduced [2Fe-2S]-[ferredoxin] + 2 H(+). The enzyme catalyses dimethylallyl diphosphate + 2 oxidized [2Fe-2S]-[ferredoxin] + H2O = (2E)-4-hydroxy-3-methylbut-2-enyl diphosphate + 2 reduced [2Fe-2S]-[ferredoxin] + 2 H(+). The protein operates within isoprenoid biosynthesis; dimethylallyl diphosphate biosynthesis; dimethylallyl diphosphate from (2E)-4-hydroxy-3-methylbutenyl diphosphate: step 1/1. It functions in the pathway isoprenoid biosynthesis; isopentenyl diphosphate biosynthesis via DXP pathway; isopentenyl diphosphate from 1-deoxy-D-xylulose 5-phosphate: step 6/6. Functionally, catalyzes the conversion of 1-hydroxy-2-methyl-2-(E)-butenyl 4-diphosphate (HMBPP) into a mixture of isopentenyl diphosphate (IPP) and dimethylallyl diphosphate (DMAPP). Acts in the terminal step of the DOXP/MEP pathway for isoprenoid precursor biosynthesis. This is 4-hydroxy-3-methylbut-2-enyl diphosphate reductase from Gloeothece citriformis (strain PCC 7424) (Cyanothece sp. (strain PCC 7424)).